The following is a 385-amino-acid chain: Protein delta homolog 1 (385 aa).

The signal sequence occupies residues 1-23 (MIATGALLRVLLLLLAFGHSTYG). EGF-like domains are found at residues 24–55 (AECD…PLCD), 53–86 (LCDK…KFCE), 88–125 (DVRA…KDCQ), 127–168 (KAGP…NFCE), 172–208 (ATNS…KTCS), and 210–247 (PVSN…PTCA). Topologically, residues 24 to 305 (AECDPPCDPQ…KSTPLLTEGQ (282 aa)) are extracellular. Cystine bridges form between Cys26/Cys37, Cys30/Cys43, Cys45/Cys54, Cys57/Cys68, Cys63/Cys74, Cys76/Cys85, Cys92/Cys103, Cys97/Cys113, Cys115/Cys124, Cys131/Cys144, Cys138/Cys156, and Cys158/Cys167. The O-linked (GalNAc...) serine glycan is linked to Ser94. N-linked (GlcNAc...) asparagine glycosylation occurs at Asn100. Residue Asn165 is glycosylated (N-linked (GlcNAc...) asparagine; atypical; partial). N-linked (GlcNAc...) asparagine; atypical glycosylation is present at Asn174. Disulfide bonds link Cys176/Cys187, Cys181/Cys196, Cys198/Cys207, Cys214/Cys225, Cys219/Cys235, and Cys237/Cys246. An O-linked (GalNAc...) serine glycan is attached at Ser216. Thr224 carries an O-linked (GalNAc...) threonine glycan. Thr258 carries O-linked (GalNAc...) threonine glycosylation. Thr267 carries O-linked (GalNAc...) threonine; partial glycosylation. Thr271 carries an O-linked (GalNAc...) threonine glycan. Asn295 carries N-linked (GlcNAc...) asparagine glycosylation. The helical transmembrane segment at 306–329 (AICFTILGVLTSLVVLGTVAIVFL) threads the bilayer. Topologically, residues 330–385 (NKCETWVSNLRYNHTFRKKKNLLLQYNSGEELAVNIIFPEKIDMTTFNKEAGDEEI) are cytoplasmic.

As to quaternary structure, monomer. Interacts with SH3RF2. N- and O-glycosylated. As to expression, highly expressed in fetal liver, placenta, adult adrenal gland, brain, testis and ovary and, to a lesser degree, in adult kidney, muscle, thymus and heart.

The protein localises to the membrane. Its subcellular location is the cytoplasm. Its function is as follows. May have a role in neuroendocrine differentiation. Inhibits adipocyte differentiation. In Mus musculus (Mouse), this protein is Protein delta homolog 1 (Dlk1).